Reading from the N-terminus, the 362-residue chain is Dual-specificity RNA methyltransferase RlmN (362 aa).

E91 acts as the Proton acceptor in catalysis. The 237-residue stretch at 97-333 (EDDRGTLCVS…VTTRKTRGED (237 aa)) folds into the Radical SAM core domain. C104 and C338 are oxidised to a cystine. Residues C111, C115, and C118 each coordinate [4Fe-4S] cluster. Residues 164–165 (GE), S196, 218–220 (SLH), and N295 each bind S-adenosyl-L-methionine. Residue C338 is the S-methylcysteine intermediate of the active site.

Belongs to the radical SAM superfamily. RlmN family. Requires [4Fe-4S] cluster as cofactor.

It localises to the cytoplasm. It catalyses the reaction adenosine(2503) in 23S rRNA + 2 reduced [2Fe-2S]-[ferredoxin] + 2 S-adenosyl-L-methionine = 2-methyladenosine(2503) in 23S rRNA + 5'-deoxyadenosine + L-methionine + 2 oxidized [2Fe-2S]-[ferredoxin] + S-adenosyl-L-homocysteine. The catalysed reaction is adenosine(37) in tRNA + 2 reduced [2Fe-2S]-[ferredoxin] + 2 S-adenosyl-L-methionine = 2-methyladenosine(37) in tRNA + 5'-deoxyadenosine + L-methionine + 2 oxidized [2Fe-2S]-[ferredoxin] + S-adenosyl-L-homocysteine. Functionally, specifically methylates position 2 of adenine 2503 in 23S rRNA and position 2 of adenine 37 in tRNAs. m2A2503 modification seems to play a crucial role in the proofreading step occurring at the peptidyl transferase center and thus would serve to optimize ribosomal fidelity. This Methylobacillus flagellatus (strain ATCC 51484 / DSM 6875 / VKM B-1610 / KT) protein is Dual-specificity RNA methyltransferase RlmN.